The sequence spans 89 residues: MSLSVEAKAQILAEFGRCENDTGSSEVQVALLTAQINHLQGHFKEHIHDHHSRRGLLRMVSTRRKLLAYLKRTENVRYQELIKKLGLRR.

The protein belongs to the universal ribosomal protein uS15 family. As to quaternary structure, part of the 30S ribosomal subunit. Forms a bridge to the 50S subunit in the 70S ribosome, contacting the 23S rRNA.

Functionally, one of the primary rRNA binding proteins, it binds directly to 16S rRNA where it helps nucleate assembly of the platform of the 30S subunit by binding and bridging several RNA helices of the 16S rRNA. Forms an intersubunit bridge (bridge B4) with the 23S rRNA of the 50S subunit in the ribosome. In Shewanella halifaxensis (strain HAW-EB4), this protein is Small ribosomal subunit protein uS15.